Reading from the N-terminus, the 378-residue chain is GDP-mannose 3,5-epimerase 1 (378 aa).

NAD(+)-binding positions include 36–62 (GAGGFIGSHIARRLKSEGHYIIASDWK), Asp-60, and Asp-80. Residues Gly-105 and 145–147 (SAC) contribute to the substrate site. NAD(+) is bound by residues Tyr-175 and Lys-179. Tyr-175 serves as the catalytic Proton acceptor. Substrate-binding positions include Asn-204, 217-219 (EKA), Lys-226, 242-244 (QTR), Arg-307, and Ser-357.

This sequence belongs to the NAD(P)-dependent epimerase/dehydratase family. Homodimer. NAD(+) serves as cofactor.

It carries out the reaction GDP-alpha-D-mannose = GDP-beta-L-gulose. The catalysed reaction is GDP-beta-L-gulose = GDP-beta-L-galactose. Its pathway is cofactor biosynthesis; L-ascorbate biosynthesis via GDP-alpha-D-mannose pathway; L-ascorbate from GDP-alpha-D-mannose: step 1/5. Functionally, catalyzes a reversible epimerization of GDP-D-mannose that precedes the committed step in the biosynthesis of vitamin C (L-ascorbate), resulting in the hydrolysis of the highly energetic glycosyl-pyrophosphoryl linkage. Able to catalyze 2 distinct epimerization reactions and can release both GDP-L-galactose and GDP-L-gulose from GDP-mannose. The protein is GDP-mannose 3,5-epimerase 1 of Oryza sativa subsp. indica (Rice).